We begin with the raw amino-acid sequence, 242 residues long: Probable transcriptional regulatory protein NGK_1508 (242 aa).

It belongs to the TACO1 family.

It is found in the cytoplasm. The polypeptide is Probable transcriptional regulatory protein NGK_1508 (Neisseria gonorrhoeae (strain NCCP11945)).